A 511-amino-acid chain; its full sequence is DELLA protein RGL1 (511 aa).

The segment covering 1–11 (MKREHNHRESS) has biased composition (basic and acidic residues). The disordered stretch occupies residues 1-20 (MKREHNHRESSAGEGGSSSM). The DELLA motif signature appears at 32-36 (DELLV). Positions 54-58 (LEQLE) match the LEXLE motif motif. The VHYNP motif motif lies at 73–77 (VHYNP). The 364-residue stretch at 143 to 506 (LDSQETGVRL…RPLIATSAWR (364 aa)) folds into the GRAS domain. Residues 150 to 204 (VRLVHALLACAEAVQQNNLKLADALVKHVGLLASSQAGAMRKVATYFAEGLARRI) are leucine repeat I (LRI). Residues 157–161 (LACAE) carry the LxCxE motif motif. The interval 223 to 288 (QIHFYESCPY…NGPPDFRLTG (66 aa)) is VHIID. The VHIID motif lies at 254–258 (VHVID). The leucine repeat II (LRII) stretch occupies residues 298–330 (EVGWKLGQLASTIGVNFEFKSIALNNLSDLKPE). Positions 341–427 (VAVNSVFELH…ELFLGRQILN (87 aa)) are PFYRE. The LXXLL motif motif lies at 349-353 (LHRLL). Residues 430–506 (ACEGEDRVER…RPLIATSAWR (77 aa)) form an SAW region.

The protein belongs to the GRAS family. DELLA subfamily. Interacts directly with the GID2/SLY1 component of the SCF(GID2) complex. Interacts (via N-terminus) with GID1A, GID1B and GID1B (via N-terminus). Interacts with the BOI proteins BOI, BRG1, BRG2 and BRG3. Binds to and coactivates GAF1/IDD2 and ENY/IDD1. Phosphorylated. In terms of processing, may be ubiquitinated, as suggested by its interaction with GID2. Ubiquitination is however unsure since in contrast to other DELLA proteins, it is not ubiquitinated and degraded upon GA application. Nevertheless, ubiquitination may be triggered by other processes. Predominantly expressed in germinating seeds and flowers and siliques. Highly expressed in inflorescences and weakly or not expressed in rosette leaves, etiolated seedlings, siliques, mature stems and roots. RGA and GAI transcripts were detected at slightly varying levels in all tissues examined. RGL2 signal was undetected, and RGL3 signal was very weak in all tissues examined (rosette leaves, seedlings, inflorescences, and siliques) except inflorescences. In the flower, it is expressed in developing ovules as well as in developing anthers throughout microspore development.

It is found in the nucleus. Its function is as follows. Probable transcriptional regulator that acts as a repressor of the gibberellin (GA) signaling pathway. No effect of the BOI proteins on its stability. Probably acts by participating in large multiprotein complexes that repress transcription of GA-inducible genes. Has overlapping but distinct roles in GA signaling compared to RGA and GAI. Regulates the floral development. May also participate in seed germination and in ovule and anther development. Its activity is probably regulated by other phytohormones such as auxin and ethylene. This is DELLA protein RGL1 (RGL1) from Arabidopsis thaliana (Mouse-ear cress).